The chain runs to 87 residues: MAKATSSLVVPIIFLVIFALVEQNTGCFDYDVYQPCDHCRERCLKYYPVTRKAICRKNHCVCIGPCPNDKAIPNVKLFKNVKEQILS.

The first 23 residues, 1 to 23 (MAKATSSLVVPIIFLVIFALVEQ), serve as a signal peptide directing secretion. 4 cysteine pairs are disulfide-bonded: Cys27/Cys66, Cys36/Cys55, Cys39/Cys60, and Cys43/Cys62.

It belongs to the DEFL family.

It localises to the secreted. This is Defensin-like protein 175 from Arabidopsis thaliana (Mouse-ear cress).